Reading from the N-terminus, the 841-residue chain is ATP-dependent helicase Lhr-Core (841 aa).

ATP is bound by residues glutamine 39, lysine 62, threonine 63, aspartate 181, glutamate 182, isoleucine 352, arginine 369, and histidine 372. Positions 43–234 (IKEIHEGKNV…FLVGNGRDCY (192 aa)) constitute a Helicase ATP-binding domain. The DEVH box signature appears at 181 to 184 (DEIH). The Helicase C-terminal domain occupies 266-416 (RLYNLLKKLI…RIHIPKNCLD (151 aa)). Positions 417 to 500 (VLAQHLVGMA…IYYMNVGTIP (84 aa)) are WH domain. A domain 4 region spans residues 501 to 841 (DETAVDVIAD…MEFISMKGKK (341 aa)).

It belongs to the Lhr helicase family. Lhr-Core subfamily. In terms of assembly, monomer.

The enzyme catalyses Couples ATP hydrolysis with the unwinding of duplex DNA by translocating in the 3'-5' direction.. It carries out the reaction ATP + H2O = ADP + phosphate + H(+). Functionally, DNA helicase that loads on single-stranded (ss)DNA and translocates in a 3'-5' direction, probably involved in DNA repair. Archaeal orthologs have double-stranded (ds)DNA and/or RNA:DNA helicase activity. The protein is ATP-dependent helicase Lhr-Core of Methanocaldococcus jannaschii (strain ATCC 43067 / DSM 2661 / JAL-1 / JCM 10045 / NBRC 100440) (Methanococcus jannaschii).